A 367-amino-acid polypeptide reads, in one-letter code: Serine/threonine-protein kinase Sgk2 (367 aa).

The segment at 1-28 (MASSPVGVPSPQPSRANGNINLGPSANP) is disordered. Ser10 is modified (phosphoserine). Polar residues predominate over residues 15-28 (RANGNINLGPSANP). The Protein kinase domain maps to 35–292 (FDFLKVIGKG…FLDIKNHMFF (258 aa)). Residues 41 to 49 (IGKGNYGKV) and Lys64 each bind ATP. Positions 68–78 (KKSILKNKEQN) match the Nuclear localization signal motif. The active-site Proton acceptor is Asp159. Residue Thr193 is modified to Phosphothreonine; by PDPK1. The 75-residue stretch at 293–367 (SPINWDDLYH…AQDDDDILDS (75 aa)) folds into the AGC-kinase C-terminal domain. Phosphoserine is present on residues Ser334 and Ser356. Tyr357 is modified (phosphotyrosine).

The protein belongs to the protein kinase superfamily. AGC Ser/Thr protein kinase family. Activated by phosphorylation on Ser-356 by an unknown kinase (may be mTORC2 but not confirmed), transforming it into a substrate for PDPK1 which then phosphorylates it on Thr-193.

Its subcellular location is the cytoplasm. It localises to the nucleus. It carries out the reaction L-seryl-[protein] + ATP = O-phospho-L-seryl-[protein] + ADP + H(+). The catalysed reaction is L-threonyl-[protein] + ATP = O-phospho-L-threonyl-[protein] + ADP + H(+). With respect to regulation, two specific sites, one in the kinase domain (Thr-193) and the other in the C-terminal regulatory region (Ser-356), need to be phosphorylated for its full activation. Functionally, serine/threonine-protein kinase which is involved in the regulation of a wide variety of ion channels, membrane transporters, cell growth, survival and proliferation. Up-regulates Na(+) channels: SCNN1A/ENAC, K(+) channels: KCNA3/Kv1.3, KCNE1 and KCNQ1, amino acid transporter: SLC6A19, glutamate transporter: SLC1A6/EAAT4, glutamate receptors: GRIA1/GLUR1 and GRIK2/GLUR6, Na(+)/H(+) exchanger: SLC9A3/NHE3, and the Na(+)/K(+) ATPase. In Mus musculus (Mouse), this protein is Serine/threonine-protein kinase Sgk2 (Sgk2).